The sequence spans 723 residues: BTB/POZ domain-containing protein 18 (723 aa).

The BTB domain maps to cysteine 34 to glutamine 102. Disordered stretches follow at residues alanine 150–leucine 176, glutamate 188–glutamine 350, and glutamate 370–threonine 394. Composition is skewed to polar residues over residues arginine 162–serine 174 and asparagine 195–threonine 205. Composition is skewed to low complexity over residues glutamine 217–arginine 227 and threonine 271–threonine 286. 2 stretches are compositionally biased toward basic and acidic residues: residues glutamine 303–glutamate 312 and lysine 327–proline 336. Serine 414 is subject to Phosphoserine. The tract at residues threonine 603–leucine 637 is disordered. The segment covering glutamine 617–serine 626 has biased composition (basic and acidic residues). The segment covering serine 627–histidine 636 has biased composition (polar residues). Phosphoserine occurs at positions 682 and 683. The segment at leucine 699 to threonine 723 is disordered. Residues serine 713–threonine 723 are compositionally biased toward acidic residues.

As to expression, expressed in testis.

It localises to the nucleus. In terms of biological role, specifically required during spermatogenesis to promote expression of piRNA precursors. The piRNA metabolic process mediates the repression of transposable elements during meiosis by forming complexes composed of piRNAs and Piwi proteins and governs the methylation and subsequent repression of transposons, which is essential for the germline integrity. Acts by facilitating transcription elongation at piRNA loci during pachytene. The chain is BTB/POZ domain-containing protein 18 from Mus musculus (Mouse).